Reading from the N-terminus, the 207-residue chain is Macrophage immunometabolism regulator (207 aa).

Position 1 is an N-acetylmethionine (Met1). The interval 1 to 41 is disordered; it reads MEVDVNGESRSALTTLPLPVAEASSPGKAEAEKPRCSSTPC. 3 positions are modified to phosphoserine: Ser25, Ser140, and Ser167.

Belongs to the UNC119-binding protein family. Interacts with UNC119 and UNC119B; interaction preferentially takes place when UNC119 and UNC119B are unliganded with myristoylated proteins.

It is found in the cytoplasm. It localises to the cell projection. The protein localises to the cilium. Regulates the macrophage function, by enhancing the resolution of inflammation and wound repair functions mediated by M2 macrophages. The regulation of macrophage function is, due at least in part, to its ability to inhibit glycolysis. May play also a role in trafficking of proteins via its interaction with UNC119 and UNC119B cargo adapters: may help the release of UNC119 and UNC119B cargo or the recycling of UNC119 and UNC119B. May play a role in ciliary membrane localization via its interaction with UNC119B and protein transport into photoreceptor cells. This chain is Macrophage immunometabolism regulator (MACIR), found in Bos taurus (Bovine).